Here is a 612-residue protein sequence, read N- to C-terminus: Netrin unc-6 (612 aa).

Residues 1 to 21 (MITSVLRYVLALYFCMGIAHG) form the signal peptide. The Laminin N-terminal domain occupies 43 to 290 (RPVRCVPEFI…SMGELAVGGR (248 aa)). 3 N-linked (GlcNAc...) asparagine glycosylation sites follow: N114, N128, and N268. A disulfide bond links C117 and C149. 14 cysteine pairs are disulfide-bonded: C291–C300, C293–C310, C312–C321, C324–C344, C347–C356, C349–C374, C377–C386, C389–C407, C410–C422, C412–C429, C431–C440, C443–C457, C478–C547, and C494–C604. Laminin EGF-like domains lie at 291 to 346 (CKCN…SCVA), 347 to 409 (CNCN…ACKS), and 410 to 459 (CGCH…PCIK). Residue N368 is glycosylated (N-linked (GlcNAc...) asparagine). A glycan (N-linked (GlcNAc...) asparagine) is linked at N423. Positions 478–604 (CSKCRIVPKR…FSKKDKLGQC (127 aa)) constitute an NTR domain. A glycan (N-linked (GlcNAc...) asparagine) is linked at N564.

Binds to unc-5 and unc-40 receptors.

It is found in the secreted. Its subcellular location is the extracellular space. The protein resides in the extracellular matrix. The protein localises to the basement membrane. Its function is as follows. Component of an extracellular matrix cue that guides dorsoventral migrations on the epidermis. Required for the guidance of pioneer axons and migrating cells along the body wall. In particular, it is required for the guidance of axons from neurons, including SubL neurons and AIY interneurons, into the nerve ring. During gonad morphogenesis, involved in distal tip cell (DTC) migration from the dorsal side of the hermaphrodite body to the midbody to allow for formation of gonad arms. Its association with either unc-40 or unc-5 receptors will lead to axon attraction or repulsion, respectively. Involved in dendritic morphogenesis; may act by association with unc-40 at the tips of growing dendrites for interaction with unc-5 on the apposing branch to induce mutual repulsion. Involved in the positioning of ray 1, the most anterior ray sensilium, in the male tail. Required for the formation of synapses between the AVA interneurons and the PHB sensory neurons. This is Netrin unc-6 from Caenorhabditis elegans.